A 210-amino-acid chain; its full sequence is Dynein regulatory complex protein 12 (210 aa).

The interval 1 to 23 is disordered; the sequence is MPPKNKEKGKKSGAQKKKKNWGA. A compositionally biased stretch (basic residues) spans 7-20; that stretch reads EKGKKSGAQKKKKN. The stretch at 49–161 forms a coiled coil; sequence RDEARRAKAS…EAKYEEILHD (113 aa). The tract at residues 188 to 210 is disordered; that stretch reads HKEQQRQFGLTPPGSLRPPAPSL.

Belongs to the DRC12 family. As to quaternary structure, component of the nexin-dynein regulatory complex (N-DRC).

It localises to the cytoplasm. The protein localises to the cytoskeleton. It is found in the flagellum axoneme. Component of the nexin-dynein regulatory complex (N-DRC), a key regulator of ciliary/flagellar motility which maintains the alignment and integrity of the distal axoneme and regulates microtubule sliding in motile axonemes. This is Dynein regulatory complex protein 12 from Homo sapiens (Human).